We begin with the raw amino-acid sequence, 204 residues long: Large ribosomal subunit protein uL4 (204 aa).

The tract at residues 56–79 (VSGTTAKPYGQKRTGRARQGSLRS) is disordered.

The protein belongs to the universal ribosomal protein uL4 family. Part of the 50S ribosomal subunit.

In terms of biological role, one of the primary rRNA binding proteins, this protein initially binds near the 5'-end of the 23S rRNA. It is important during the early stages of 50S assembly. It makes multiple contacts with different domains of the 23S rRNA in the assembled 50S subunit and ribosome. Functionally, forms part of the polypeptide exit tunnel. This chain is Large ribosomal subunit protein uL4, found in Wolbachia pipientis subsp. Culex pipiens (strain wPip).